The sequence spans 337 residues: tRNA N6-adenosine threonylcarbamoyltransferase (337 aa).

The Fe cation site is built by His-111 and His-115. Substrate-binding positions include 134–138 (LVSGG), Asp-167, Gly-180, and Asn-272. Asp-300 provides a ligand contact to Fe cation.

This sequence belongs to the KAE1 / TsaD family. Fe(2+) is required as a cofactor.

It localises to the cytoplasm. The catalysed reaction is L-threonylcarbamoyladenylate + adenosine(37) in tRNA = N(6)-L-threonylcarbamoyladenosine(37) in tRNA + AMP + H(+). In terms of biological role, required for the formation of a threonylcarbamoyl group on adenosine at position 37 (t(6)A37) in tRNAs that read codons beginning with adenine. Is involved in the transfer of the threonylcarbamoyl moiety of threonylcarbamoyl-AMP (TC-AMP) to the N6 group of A37, together with TsaE and TsaB. TsaD likely plays a direct catalytic role in this reaction. The sequence is that of tRNA N6-adenosine threonylcarbamoyltransferase from Photorhabdus laumondii subsp. laumondii (strain DSM 15139 / CIP 105565 / TT01) (Photorhabdus luminescens subsp. laumondii).